Here is a 482-residue protein sequence, read N- to C-terminus: 2-succinylbenzoate--CoA ligase (482 aa).

Belongs to the ATP-dependent AMP-binding enzyme family. MenE subfamily.

The enzyme catalyses 2-succinylbenzoate + ATP + CoA = 2-succinylbenzoyl-CoA + AMP + diphosphate. It functions in the pathway quinol/quinone metabolism; 1,4-dihydroxy-2-naphthoate biosynthesis; 1,4-dihydroxy-2-naphthoate from chorismate: step 5/7. It participates in quinol/quinone metabolism; menaquinone biosynthesis. Functionally, converts 2-succinylbenzoate (OSB) to 2-succinylbenzoyl-CoA (OSB-CoA). The chain is 2-succinylbenzoate--CoA ligase from Bacillus thuringiensis subsp. konkukian (strain 97-27).